A 561-amino-acid chain; its full sequence is Cytosolic purine 5'-nucleotidase (561 aa).

The Nucleophile role is filled by Asp-52. GMP-binding residues include Asp-52 and Asp-54. Asp-52 and Asp-54 together coordinate IMP. Residues Asp-52 and Asp-54 each contribute to the Mg(2+) site. Residue Asp-54 is the Proton donor of the active site. Arg-144 provides a ligand contact to (2R)-2,3-bisphosphoglycerate. ATP is bound by residues Arg-144 and Asn-154. Arg-144 and Asn-154 together coordinate dATP. Asn-154 contacts adenosine. A P(1),P(4)-bis(5'-adenosyl) tetraphosphate-binding site is contributed by Asn-154. GMP contacts are provided by Arg-202, Asp-206, Lys-215, Thr-249, and Asn-250. Residues Arg-202, Asp-206, Lys-215, Thr-249, Asn-250, Ser-251, and Lys-292 each contribute to the IMP site. A GMP-binding site is contributed by Lys-292. Asp-351 is a binding site for Mg(2+). Lys-362 provides a ligand contact to (2R)-2,3-bisphosphoglycerate. A P(1),P(4)-bis(5'-adenosyl) tetraphosphate-binding site is contributed by Lys-362. Phosphoserine is present on Ser-418. Positions 436 and 453 each coordinate adenosine. Residues Gln-453 and Arg-456 each coordinate ATP. DATP contacts are provided by Gln-453 and Arg-456. Gln-453 serves as a coordination point for P(1),P(4)-bis(5'-adenosyl) tetraphosphate. Tyr-457 provides a ligand contact to (2R)-2,3-bisphosphoglycerate. Tyr-457 contributes to the P(1),P(4)-bis(5'-adenosyl) tetraphosphate binding site. Phosphoserine occurs at positions 502, 511, and 527. A disordered region spans residues 538-561; that stretch reads PLAPQEITHCHDEDDDEEEEEEEE. The required for tetramer assembly stretch occupies residues 548–561; it reads HDEDDDEEEEEEEE. The segment covering 550 to 561 has biased composition (acidic residues); it reads EDDDEEEEEEEE.

The protein belongs to the 5'(3')-deoxyribonucleotidase family. In terms of assembly, homotetramer. Mg(2+) is required as a cofactor. As to expression, widely expressed.

The protein localises to the cytoplasm. It is found in the cytosol. It catalyses the reaction a ribonucleoside 5'-phosphate + H2O = a ribonucleoside + phosphate. The enzyme catalyses a 2'-deoxyribonucleoside + a ribonucleoside 5'-phosphate = a ribonucleoside + a 2'-deoxyribonucleoside 5'-phosphate. It carries out the reaction IMP + H2O = inosine + phosphate. The catalysed reaction is GMP + H2O = guanosine + phosphate. It catalyses the reaction dIMP + H2O = 2'-deoxyinosine + phosphate. The enzyme catalyses dGMP + H2O = 2'-deoxyguanosine + phosphate. It carries out the reaction XMP + H2O = xanthosine + phosphate. The catalysed reaction is inosine + GMP = guanosine + IMP. It catalyses the reaction dGMP + inosine = 2'-deoxyguanosine + IMP. The enzyme catalyses dIMP + inosine = 2'-deoxyinosine + IMP. It carries out the reaction inosine + UMP = uridine + IMP. The catalysed reaction is inosine + CMP = cytidine + IMP. It catalyses the reaction inosine + AMP = IMP + adenosine. With respect to regulation, allosterically activated by various compounds including ATP, 2,3-BPG/2,3-Bisphosphoglyceric acid and Ap4A/P1,P4-bis(5'-adenosyl) tetraphosphate. Binding of an allosteric activator is a prerequisiste to magnesium and substrate binding. Inhibited by inorganic phosphate. Broad specificity cytosolic 5'-nucleotidase that catalyzes the dephosphorylation of 6-hydroxypurine nucleoside 5'-monophosphates. In addition, possesses a phosphotransferase activity by which it can transfer a phosphate from a donor nucleoside monophosphate to an acceptor nucleoside, preferably inosine, deoxyinosine and guanosine. Has the highest activities for IMP and GMP followed by dIMP, dGMP and XMP. Could also catalyze the transfer of phosphates from pyrimidine monophosphates but with lower efficiency. Through these activities regulates the purine nucleoside/nucleotide pools within the cell. The sequence is that of Cytosolic purine 5'-nucleotidase from Homo sapiens (Human).